A 58-amino-acid polypeptide reads, in one-letter code: Large ribosomal subunit protein bL32 (58 aa).

Basic residues predominate over residues 1–20 (MALPKHKKSKSKRDKRRTHQ). The tract at residues 1-26 (MALPKHKKSKSKRDKRRTHQKLTAPN) is disordered.

Belongs to the bacterial ribosomal protein bL32 family.

The protein is Large ribosomal subunit protein bL32 of Desulfatibacillum aliphaticivorans.